The following is a 151-amino-acid chain: Gametocyte-specific factor 1-like (151 aa).

2 consecutive CHHC U11-48K-type zinc fingers follow at residues 6–33 (IEIC…RKKN) and 40–67 (MASC…VNRS). The Zn(2+) site is built by Cys-9, His-15, His-25, Cys-29, Cys-43, His-49, His-59, and Cys-63. The tract at residues 130-151 (QESRGGDQCPEDPQTRTRKANF) is disordered.

Belongs to the UPF0224 (FAM112) family.

The polypeptide is Gametocyte-specific factor 1-like (Gtsf1l) (Mus musculus (Mouse)).